The chain runs to 325 residues: Melanocortin receptor 5 (325 aa).

Over Met-1–Gly-37 the chain is Extracellular. 4 N-linked (GlcNAc...) asparagine glycosylation sites follow: Asn-2, Asn-15, Asn-20, and Asn-28. A helical membrane pass occupies residues Ile-38–Ile-61. The Cytoplasmic segment spans residues Val-62–Phe-73. A helical membrane pass occupies residues Phe-74–Tyr-97. Residues Leu-98–Leu-114 are Extracellular-facing. A helical membrane pass occupies residues Asp-115–Val-138. At Asp-139–Thr-155 the chain is on the cytoplasmic side. A helical transmembrane segment spans residues Gly-156 to Val-179. At Tyr-180–Val-186 the chain is on the extracellular side. Residues Val-187 to Leu-211 form a helical membrane-spanning segment. Over Ala-212–Thr-239 the chain is Cytoplasmic. The chain crosses the membrane as a helical span at residues Leu-240–Pro-265. At His-266 to Phe-273 the chain is on the extracellular side. A helical membrane pass occupies residues Met-274–Phe-297. Residues Arg-298–Tyr-325 lie on the Cytoplasmic side of the membrane. A lipid anchor (S-palmitoyl cysteine) is attached at Cys-311.

This sequence belongs to the G-protein coupled receptor 1 family.

The protein localises to the cell membrane. In terms of biological role, receptor for MSH (alpha, beta and gamma) and ACTH. The activity of this receptor is mediated by G proteins which activate adenylate cyclase. This receptor is a possible mediator of the immunomodulation properties of melanocortins. The protein is Melanocortin receptor 5 (MC5R) of Bos taurus (Bovine).